A 411-amino-acid chain; its full sequence is Ornithine aminotransferase (411 aa).

Lysine 257 carries the post-translational modification N6-(pyridoxal phosphate)lysine.

It belongs to the class-III pyridoxal-phosphate-dependent aminotransferase family. OAT subfamily. Pyridoxal 5'-phosphate serves as cofactor.

The protein localises to the cytoplasm. The catalysed reaction is a 2-oxocarboxylate + L-ornithine = L-glutamate 5-semialdehyde + an L-alpha-amino acid. Its pathway is amino-acid biosynthesis; L-proline biosynthesis; L-glutamate 5-semialdehyde from L-ornithine: step 1/1. In terms of biological role, catalyzes the interconversion of ornithine to glutamate semialdehyde. This chain is Ornithine aminotransferase, found in Bordetella bronchiseptica (strain ATCC BAA-588 / NCTC 13252 / RB50) (Alcaligenes bronchisepticus).